A 182-amino-acid polypeptide reads, in one-letter code: Large ribosomal subunit protein uL5 (182 aa).

Belongs to the universal ribosomal protein uL5 family. In terms of assembly, part of the 50S ribosomal subunit; part of the 5S rRNA/L5/L18/L25 subcomplex. Contacts the 5S rRNA and the P site tRNA. Forms a bridge to the 30S subunit in the 70S ribosome.

This is one of the proteins that bind and probably mediate the attachment of the 5S RNA into the large ribosomal subunit, where it forms part of the central protuberance. In the 70S ribosome it contacts protein S13 of the 30S subunit (bridge B1b), connecting the 2 subunits; this bridge is implicated in subunit movement. Contacts the P site tRNA; the 5S rRNA and some of its associated proteins might help stabilize positioning of ribosome-bound tRNAs. The polypeptide is Large ribosomal subunit protein uL5 (Mycoplasma mobile (strain ATCC 43663 / 163K / NCTC 11711) (Mesomycoplasma mobile)).